We begin with the raw amino-acid sequence, 202 residues long: Probable adenylyl-sulfate kinase (202 aa).

36–43 contacts ATP; that stretch reads GLSGSGKS. The Phosphoserine intermediate role is filled by Ser110.

Belongs to the APS kinase family.

The catalysed reaction is adenosine 5'-phosphosulfate + ATP = 3'-phosphoadenylyl sulfate + ADP + H(+). It functions in the pathway sulfur metabolism; hydrogen sulfide biosynthesis; sulfite from sulfate: step 2/3. Its function is as follows. Catalyzes the synthesis of activated sulfate. The chain is Probable adenylyl-sulfate kinase from Halalkalibacterium halodurans (strain ATCC BAA-125 / DSM 18197 / FERM 7344 / JCM 9153 / C-125) (Bacillus halodurans).